The primary structure comprises 62 residues: MEKLPHLLRHWVEHTKEHRERFEEVASKIESTHPEIAKKLKEAAEKYREVEEILKKAVDMVG.

Residues 28–61 adopt a coiled-coil conformation; the sequence is KIESTHPEIAKKLKEAAEKYREVEEILKKAVDMV.

This is an uncharacterized protein from Archaeoglobus fulgidus (strain ATCC 49558 / DSM 4304 / JCM 9628 / NBRC 100126 / VC-16).